We begin with the raw amino-acid sequence, 436 residues long: Trigger factor (436 aa).

One can recognise a PPIase FKBP-type domain in the interval 163 to 248 (GDTVNIDFDG…VNEIKYKDVP (86 aa)).

This sequence belongs to the FKBP-type PPIase family. Tig subfamily.

It is found in the cytoplasm. The enzyme catalyses [protein]-peptidylproline (omega=180) = [protein]-peptidylproline (omega=0). Its function is as follows. Involved in protein export. Acts as a chaperone by maintaining the newly synthesized protein in an open conformation. Functions as a peptidyl-prolyl cis-trans isomerase. The protein is Trigger factor of Staphylococcus saprophyticus subsp. saprophyticus (strain ATCC 15305 / DSM 20229 / NCIMB 8711 / NCTC 7292 / S-41).